Reading from the N-terminus, the 123-residue chain is Small ribosomal subunit protein uS17 (123 aa).

The protein belongs to the universal ribosomal protein uS17 family. Part of the 30S ribosomal subunit.

Functionally, one of the primary rRNA binding proteins, it binds specifically to the 5'-end of 16S ribosomal RNA. The polypeptide is Small ribosomal subunit protein uS17 (Pyrobaculum aerophilum (strain ATCC 51768 / DSM 7523 / JCM 9630 / CIP 104966 / NBRC 100827 / IM2)).